A 172-amino-acid polypeptide reads, in one-letter code: Outer-membrane lipoprotein carrier protein (172 aa).

A signal peptide spans 1–16 (MRIALLWVAFGALALA).

This sequence belongs to the LolA family. As to quaternary structure, monomer.

The protein resides in the periplasm. Its function is as follows. Participates in the translocation of lipoproteins from the inner membrane to the outer membrane. Only forms a complex with a lipoprotein if the residue after the N-terminal Cys is not an aspartate (The Asp acts as a targeting signal to indicate that the lipoprotein should stay in the inner membrane). This Wolinella succinogenes (strain ATCC 29543 / DSM 1740 / CCUG 13145 / JCM 31913 / LMG 7466 / NCTC 11488 / FDC 602W) (Vibrio succinogenes) protein is Outer-membrane lipoprotein carrier protein.